We begin with the raw amino-acid sequence, 272 residues long: Golgi to ER traffic protein 5 (272 aa).

2 disordered regions span residues 1–35 (MSTV…HSGT) and 85–105 (LHAP…PGSS). The Ubiquitin-like domain occupies 108-198 (ITVHLKSARN…VEFGVMIIGG (91 aa)). The tract at residues 212–231 (SAEQKESYEPPKPAVGPSGE) is disordered.

The protein belongs to the GET5 family. In terms of assembly, forms homodimers via its C-terminal domain. Component of the get4/get5/sgt2 sorting complex. Binds directly sgt12 homodimers.

The protein localises to the cytoplasm. Component of the get4/get5/sgt2 sorting complex involved in the GET (guided entry of TA proteins) pathway that leads to the insertion of tail-anchored (TA) proteins into the endoplasmic reticulum. Get4 and get5 form an obligate complex that catalyzes the transfer of tail-anchored proteins destined to the endoplasmic reticulum from sgt2 to the cytosolic targeting factor which then targets the TA protein to the ER membrane via get1/get2. The polypeptide is Golgi to ER traffic protein 5 (Aspergillus fumigatus (strain ATCC MYA-4609 / CBS 101355 / FGSC A1100 / Af293) (Neosartorya fumigata)).